A 215-amino-acid polypeptide reads, in one-letter code: Calmodulin-like protein 5 (215 aa).

Residues 38 to 61 (KNSPPSPSTMLPSPSSSSAPTKRI) form a disordered region. Low complexity predominate over residues 45–57 (STMLPSPSSSSAP). 4 consecutive EF-hand domains span residues 61-96 (IDPSELKRVFQMFDKNGDGRITKEELNDSLENLGIY), 97-132 (IPDKDLTQMIHKIDANGDGCVDIDEFESLYSSIVDE), 139-174 (TEEEDMKDAFNVFDQDGDGFITVEELKSVMASLGLK), and 177-212 (KTLDGCKKMIMQVDADGDGRVNYKEFLQMMKGGGFS). Ca(2+) contacts are provided by D74, N76, D78, R80, E85, D110, N112, D114, C116, E121, D152, D154, D156, E163, D190, D192, D194, R196, and E201.

Belongs to the calmodulin family.

Potential calcium sensor. The protein is Calmodulin-like protein 5 (CML5) of Arabidopsis thaliana (Mouse-ear cress).